We begin with the raw amino-acid sequence, 296 residues long: tRNA-cytidine(32) 2-sulfurtransferase (296 aa).

Positions 72 to 77 match the PP-loop motif motif; the sequence is SGGKDS. [4Fe-4S] cluster is bound by residues cysteine 147, cysteine 150, and cysteine 238.

The protein belongs to the TtcA family. In terms of assembly, homodimer. The cofactor is Mg(2+). [4Fe-4S] cluster is required as a cofactor.

Its subcellular location is the cytoplasm. It carries out the reaction cytidine(32) in tRNA + S-sulfanyl-L-cysteinyl-[cysteine desulfurase] + AH2 + ATP = 2-thiocytidine(32) in tRNA + L-cysteinyl-[cysteine desulfurase] + A + AMP + diphosphate + H(+). It functions in the pathway tRNA modification. Its function is as follows. Catalyzes the ATP-dependent 2-thiolation of cytidine in position 32 of tRNA, to form 2-thiocytidine (s(2)C32). The sulfur atoms are provided by the cysteine/cysteine desulfurase (IscS) system. In Sinorhizobium fredii (strain NBRC 101917 / NGR234), this protein is tRNA-cytidine(32) 2-sulfurtransferase.